The chain runs to 72 residues: Large ribosomal subunit protein bL31 (72 aa).

Cys16, Cys18, Cys38, and Cys41 together coordinate Zn(2+).

It belongs to the bacterial ribosomal protein bL31 family. Type A subfamily. In terms of assembly, part of the 50S ribosomal subunit. It depends on Zn(2+) as a cofactor.

Functionally, binds the 23S rRNA. The sequence is that of Large ribosomal subunit protein bL31 from Vibrio atlanticus (strain LGP32) (Vibrio splendidus (strain Mel32)).